The following is a 426-amino-acid chain: Selenate reductase subunit C (426 aa).

Helical transmembrane passes span 5–25 (LYFT…YIRL), 40–60 (WGLW…SFLL), 78–98 (LALF…LIDL), 119–139 (WEIQ…WFLM), 187–207 (ILGI…GSLF), 223–243 (IIFL…LYSF), 261–281 (LLTL…LIGL), 302–322 (FIFW…LITI), 330–350 (MGLA…ILVI), and 385–405 (VGLI…VPVF).

It belongs to the NrfD family. As to quaternary structure, the complex is composed of three subunits: SrdA, SrdB and SrdC.

The protein resides in the cell membrane. The enzyme catalyses selenite + a quinone + H2O = selenate + a quinol. Functionally, component of the respiratory selenate reductase complex, which catalyzes the reduction of selenate to selenite. This subunit probably receives electrons directly from the membrane quinone pool and transfers the electrons to the iron-sulfur clusters of SrdB. May be the membrane anchor protein subunit of the complex. The protein is Selenate reductase subunit C of Mesobacillus selenatarsenatis (strain DSM 18680 / JCM 14380 / FERM P-15431 / SF-1).